The chain runs to 250 residues: tRNA pseudouridine synthase A (250 aa).

The active-site Nucleophile is the D52. A substrate-binding site is contributed by Y111.

This sequence belongs to the tRNA pseudouridine synthase TruA family. In terms of assembly, homodimer.

It catalyses the reaction uridine(38/39/40) in tRNA = pseudouridine(38/39/40) in tRNA. Formation of pseudouridine at positions 38, 39 and 40 in the anticodon stem and loop of transfer RNAs. The polypeptide is tRNA pseudouridine synthase A (Methylorubrum extorquens (strain PA1) (Methylobacterium extorquens)).